Consider the following 113-residue polypeptide: UPF0482 protein YnfB (113 aa).

The first 28 residues, 1-28 (MNILSGKLPFLLGAVFAGSVVLATSVQA), serve as a signal peptide directing secretion.

Belongs to the UPF0482 family.

The polypeptide is UPF0482 protein YnfB (Escherichia fergusonii (strain ATCC 35469 / DSM 13698 / CCUG 18766 / IAM 14443 / JCM 21226 / LMG 7866 / NBRC 102419 / NCTC 12128 / CDC 0568-73)).